A 400-amino-acid chain; its full sequence is Elongation factor Tu (400 aa).

Residues 10-208 (KPHVNVGTIG…AMDNYIPDPQ (199 aa)) form the tr-type G domain. The interval 19-26 (GHIDHGKS) is G1. Position 19 to 26 (19 to 26 (GHIDHGKS)) interacts with GTP. Serine 26 provides a ligand contact to Mg(2+). The tract at residues 60–64 (GITIN) is G2. A G3 region spans residues 81 to 84 (DCPG). GTP is bound by residues 81–85 (DCPGH) and 136–139 (NKTD). Residues 136–139 (NKTD) form a G4 region. The tract at residues 174–176 (SAL) is G5.

This sequence belongs to the TRAFAC class translation factor GTPase superfamily. Classic translation factor GTPase family. EF-Tu/EF-1A subfamily. As to quaternary structure, monomer.

It localises to the cytoplasm. It catalyses the reaction GTP + H2O = GDP + phosphate + H(+). Functionally, GTP hydrolase that promotes the GTP-dependent binding of aminoacyl-tRNA to the A-site of ribosomes during protein biosynthesis. This Thermotoga maritima (strain ATCC 43589 / DSM 3109 / JCM 10099 / NBRC 100826 / MSB8) protein is Elongation factor Tu.